The following is a 317-amino-acid chain: Ribose-phosphate pyrophosphokinase A (317 aa).

Mg(2+)-binding residues include Asp-130, His-132, and Asp-145. The tract at residues 212 to 227 (KDKVALIVDDMADTCG) is binding of phosphoribosylpyrophosphate.

It belongs to the ribose-phosphate pyrophosphokinase family. Mg(2+) serves as cofactor.

The catalysed reaction is D-ribose 5-phosphate + ATP = 5-phospho-alpha-D-ribose 1-diphosphate + AMP + H(+). The protein operates within metabolic intermediate biosynthesis; 5-phospho-alpha-D-ribose 1-diphosphate biosynthesis; 5-phospho-alpha-D-ribose 1-diphosphate from D-ribose 5-phosphate (route I): step 1/1. The chain is Ribose-phosphate pyrophosphokinase A (prsA) from Dictyostelium discoideum (Social amoeba).